Reading from the N-terminus, the 1510-residue chain is Chromosome partition protein MukB (1510 aa).

Residues 6 to 30 adopt a coiled-coil conformation; the sequence is ELENEIELESDEVIMENENVEEIVD. Residue 75–82 participates in ATP binding; the sequence is GGNGAGKS. Coiled coils occupy residues 346–506, 553–611, 673–706, 821–846, 876–1064, 1094–1149, and 1249–1304; these read QHRL…HKMS, QQTP…EDIS, MQSQ…RLSQ, SAAR…AQIA, EALM…IQLQ, ERAR…RELV, and DAIE…LQNI. The segment at 707 to 824 is flexible hinge; the sequence is PDGSEDPRLN…EIPLFGSAAR (118 aa).

The protein belongs to the SMC family. MukB subfamily. Homodimerization via its hinge domain. Binds to DNA via its C-terminal region. Interacts, and probably forms a ternary complex, with MukE and MukF via its C-terminal region. The complex formation is stimulated by calcium or magnesium. Interacts with tubulin-related protein FtsZ.

It localises to the cytoplasm. It is found in the nucleoid. In terms of biological role, plays a central role in chromosome condensation, segregation and cell cycle progression. Functions as a homodimer, which is essential for chromosome partition. Involved in negative DNA supercoiling in vivo, and by this means organize and compact chromosomes. May achieve or facilitate chromosome segregation by condensation DNA from both sides of a centrally located replisome during cell division. The sequence is that of Chromosome partition protein MukB from Haemophilus influenzae (strain PittGG).